The chain runs to 100 residues: NADH-quinone oxidoreductase subunit K (100 aa).

A run of 3 helical transmembrane segments spans residues 4–24, 29–49, and 63–83; these read ITYY…GVLV, LVVF…FVAF, and FFVI…VIAV.

Belongs to the complex I subunit 4L family. NDH-1 is composed of 14 different subunits. Subunits NuoA, H, J, K, L, M, N constitute the membrane sector of the complex.

Its subcellular location is the cell inner membrane. The catalysed reaction is a quinone + NADH + 5 H(+)(in) = a quinol + NAD(+) + 4 H(+)(out). Its function is as follows. NDH-1 shuttles electrons from NADH, via FMN and iron-sulfur (Fe-S) centers, to quinones in the respiratory chain. The immediate electron acceptor for the enzyme in this species is believed to be ubiquinone. Couples the redox reaction to proton translocation (for every two electrons transferred, four hydrogen ions are translocated across the cytoplasmic membrane), and thus conserves the redox energy in a proton gradient. This Myxococcus xanthus (strain DK1622) protein is NADH-quinone oxidoreductase subunit K.